The chain runs to 221 residues: Ribonuclease 3 (221 aa).

The RNase III domain maps to 4-121; the sequence is LEQLEKKLGY…LWAAVYIDSG (118 aa). Residue glutamate 40 participates in Mg(2+) binding. Aspartate 44 is a catalytic residue. Aspartate 107 and glutamate 110 together coordinate Mg(2+). Glutamate 110 is an active-site residue. The 69-residue stretch at 151–219 folds into the DRBM domain; it reads DYKTILQEIT…AEELIKLLEE (69 aa).

It belongs to the ribonuclease III family. In terms of assembly, homodimer. Mg(2+) serves as cofactor.

Its subcellular location is the cytoplasm. It catalyses the reaction Endonucleolytic cleavage to 5'-phosphomonoester.. Its function is as follows. Digests double-stranded RNA. Involved in the processing of primary rRNA transcript to yield the immediate precursors to the large and small rRNAs (23S and 16S). Also processes some mRNAs, and tRNAs when they are encoded in the rRNA operon. Probably processes pre-crRNA and tracrRNA of type II CRISPR loci if present in the organism. The protein is Ribonuclease 3 (rnc) of Aquifex aeolicus (strain VF5).